A 544-amino-acid polypeptide reads, in one-letter code: Chaperonin GroEL (544 aa).

ATP-binding positions include 30–33 (TLGP), Lys-51, 87–91 (DGTTT), Gly-415, 481–483 (DAL), and Asp-497.

The protein belongs to the chaperonin (HSP60) family. In terms of assembly, forms a cylinder of 14 subunits composed of two heptameric rings stacked back-to-back. Interacts with the co-chaperonin GroES.

Its subcellular location is the cytoplasm. It catalyses the reaction ATP + H2O + a folded polypeptide = ADP + phosphate + an unfolded polypeptide.. Functionally, together with its co-chaperonin GroES, plays an essential role in assisting protein folding. The GroEL-GroES system forms a nano-cage that allows encapsulation of the non-native substrate proteins and provides a physical environment optimized to promote and accelerate protein folding. The sequence is that of Chaperonin GroEL from Chlamydia trachomatis serovar D (strain ATCC VR-885 / DSM 19411 / UW-3/Cx).